Reading from the N-terminus, the 286-residue chain is Pantothenate synthetase (286 aa).

30-37 (MGCFHQGH) contacts ATP. Residue His-37 is the Proton donor of the active site. Gln-61 is a binding site for (R)-pantoate. Gln-61 contacts beta-alanine. 147 to 150 (GEKD) is a binding site for ATP. A (R)-pantoate-binding site is contributed by Gln-153. 184-187 (MSSR) serves as a coordination point for ATP.

It belongs to the pantothenate synthetase family. As to quaternary structure, homodimer.

It is found in the cytoplasm. The catalysed reaction is (R)-pantoate + beta-alanine + ATP = (R)-pantothenate + AMP + diphosphate + H(+). It participates in cofactor biosynthesis; (R)-pantothenate biosynthesis; (R)-pantothenate from (R)-pantoate and beta-alanine: step 1/1. Functionally, catalyzes the condensation of pantoate with beta-alanine in an ATP-dependent reaction via a pantoyl-adenylate intermediate. In Desulfotalea psychrophila (strain LSv54 / DSM 12343), this protein is Pantothenate synthetase.